Reading from the N-terminus, the 571-residue chain is Coenzyme A biosynthesis protein 3 (571 aa).

2 disordered regions span residues 1-72 (MTDE…YKND) and 100-120 (INTSMPANTNGQQKRFSPSLP). Residues 8-35 (SDQNMNGKQGVNLISSLPTTQVPVSILT) are compositionally biased toward polar residues. Serine 42 bears the Phosphoserine mark. A compositionally biased stretch (basic and acidic residues) spans 43 to 59 (IHDESNFERSDSHEDQS). The segment covering 60 to 72 (KSNSNRRNIYKND) has biased composition (polar residues). Serine 116, serine 121, and serine 124 each carry phosphoserine. Disordered regions lie at residues 140 to 171 (ISNKPGKQQQQQEQLQQNQQQEEQQKAQLQEQ) and 209 to 244 (IFKENTTNDGTDIRKHSVSSGTSNSEDEVDSPSMEK). The segment covering 146–171 (KQQQQQEQLQQNQQQEEQQKAQLQEQ) has biased composition (low complexity). Serine 264 carries the post-translational modification Phosphoserine. The tract at residues 507–571 (RDEETGDKEQ…EDEEDVKTEV (65 aa)) is disordered. Positions 516–571 (QEQEEQEGADNEDDDDEDDEEDEEDEEEEEALNETASDESNDEEDEEDEEDVKTEV) are enriched in acidic residues.

The protein belongs to the HFCD (homooligomeric flavin containing Cys decarboxylase) superfamily. As to quaternary structure, component of the phosphopantothenoylcysteine decarboxylase (PPCDC) complex, a heterotrimer composed of CAB3, HAL3 and VHS3.

It is found in the cytoplasm. Functionally, component of the phosphopantothenoylcysteine decarboxylase (PPCDC) involved in the coenzyme A synthesis. This chain is Coenzyme A biosynthesis protein 3 (CAB3), found in Saccharomyces cerevisiae (strain ATCC 204508 / S288c) (Baker's yeast).